Consider the following 236-residue polypeptide: Ascorbate-specific transmembrane electron transporter 1 (236 aa).

Residues 1-11 lie on the Cytoplasmic side of the membrane; it reads MGLGLGVRAAP. Residues 12 to 32 traverse the membrane as a helical segment; it reads FTYAAHALAVAAAAMVLVWSI. The 205-residue stretch at 15–219 folds into the Cytochrome b561 domain; it reads AAHALAVAAA…FGASVVVAAI (205 aa). Over 33–50 the chain is Extracellular; that stretch reads QFRGGLAIESTNKNLIFN. The chain crosses the membrane as a helical span at residues 51–71; the sequence is VHPVLMLIGYVIIGGEAIMVY. Histidine 52 lines the heme b pocket. 67 to 75 is an L-ascorbate binding site; that stretch reads AIMVYRVLP. The Cytoplasmic segment spans residues 72–84; it reads RVLPTSNHDTTKL. A helical membrane pass occupies residues 85–105; the sequence is IHLILHGIALVLGAVGIYFAF. 2 residues coordinate heme b: histidine 86 and histidine 120. Residues 106–122 lie on the Extracellular side of the membrane; sequence KNHNESGIANLYSLHSW. Monodehydro-L-ascorbate radical is bound at residue 116 to 125; the sequence is LYSLHSWIGI. Residues 123-143 form a helical membrane-spanning segment; that stretch reads IGIGTITLYGIQWIIGFVTFF. At 144–153 the chain is on the cytoplasmic side; sequence FPGAAPNVKK. A helical membrane pass occupies residues 154–174; sequence GVLPWHVLFGLFVYILALANA. Histidine 159 is a heme b binding site. Residues 175 to 201 lie on the Extracellular side of the membrane; it reads ELGFLEKLTFLESSGLDKYGTEAFLVN. Residues 202–222 form a helical membrane-spanning segment; the sequence is FTALVVVLFGASVVVAAIAPV. The Cytoplasmic segment spans residues 223–236; it reads RLEEPQGYDPIPEN.

It depends on heme b as a cofactor.

Its subcellular location is the membrane. With respect to regulation, inhibited by diethylpyrocarbonate. Two-heme-containing cytochrome. Catalyzes ascorbate-dependent trans-membrane electron transfer by utilizing a concerted H(+)/e(-) transfer mechanism. This is Ascorbate-specific transmembrane electron transporter 1 (ZCYB) from Zea mays (Maize).